The chain runs to 524 residues: Peptide chain release factor 3 (524 aa).

The tr-type G domain maps to 10-278 (DSRRTFAIIS…TFLQFAPAPH (269 aa)). GTP is bound by residues 19–26 (SHPDAGKT), 87–91 (DTPGH), and 141–144 (NKLD).

It belongs to the TRAFAC class translation factor GTPase superfamily. Classic translation factor GTPase family. PrfC subfamily.

The protein resides in the cytoplasm. Its function is as follows. Increases the formation of ribosomal termination complexes and stimulates activities of RF-1 and RF-2. It binds guanine nucleotides and has strong preference for UGA stop codons. It may interact directly with the ribosome. The stimulation of RF-1 and RF-2 is significantly reduced by GTP and GDP, but not by GMP. The sequence is that of Peptide chain release factor 3 from Enterococcus faecalis (strain ATCC 700802 / V583).